A 585-amino-acid polypeptide reads, in one-letter code: Suppressor of tumorigenicity 7 protein (585 aa).

The helical transmembrane segment at 15–35 (CIVWSWTYLWTVWFFIVLFLV) threads the bilayer. N47 carries an N-linked (GlcNAc...) asparagine glycan. A helical transmembrane segment spans residues 62-82 (FYVALTGTSSLISGLILIFEW). S386 is subject to Phosphoserine. Residues 512–532 (LPFFILFTAGLCSFTAMLALL) traverse the membrane as a helical segment.

The protein belongs to the ST7 family.

It localises to the membrane. This chain is Suppressor of tumorigenicity 7 protein (ST7), found in Equus caballus (Horse).